The sequence spans 334 residues: Fructose-1,6-bisphosphatase class 1 (334 aa).

Residues E91, D113, L115, and D116 each coordinate Mg(2+). Substrate is bound by residues 116 to 119, N208, and K274; that span reads DGSS. Residue E280 participates in Mg(2+) binding.

Belongs to the FBPase class 1 family. As to quaternary structure, homotetramer. Mg(2+) serves as cofactor.

It localises to the cytoplasm. It carries out the reaction beta-D-fructose 1,6-bisphosphate + H2O = beta-D-fructose 6-phosphate + phosphate. It functions in the pathway carbohydrate biosynthesis; gluconeogenesis. The sequence is that of Fructose-1,6-bisphosphatase class 1 from Herminiimonas arsenicoxydans.